Reading from the N-terminus, the 28-residue chain is Phospholipase A2 2 (28 aa).

Belongs to the phospholipase A2 family. Group I subfamily. Ca(2+) is required as a cofactor. As to expression, expressed by the venom gland.

It localises to the secreted. The enzyme catalyses a 1,2-diacyl-sn-glycero-3-phosphocholine + H2O = a 1-acyl-sn-glycero-3-phosphocholine + a fatty acid + H(+). In terms of biological role, snake venom phospholipase A2 (PLA2) that inhibits neuromuscular transmission by blocking acetylcholine release from the nerve termini. PLA2 catalyzes the calcium-dependent hydrolysis of the 2-acyl groups in 3-sn-phosphoglycerides. This chain is Phospholipase A2 2, found in Micrurus nigrocinctus (Central American coral snake).